Consider the following 291-residue polypeptide: MSCQPFTSTDTFIPLNSESSATLPLIMHPSAAECLPVSNHATNVMSTATGLHYSVPFCHYGNQSSTYGVMAGSLTPCLYKFPDHTLSHGFPPMHQPLLSEDPTAADFKQELRRKSKLVEEPIDMDSPEIRELEKFANEFKVRRIKLGYTQTNVGEALAAVHGSEFSQTTICRFENLQLSFKNACKLKAILSKWLEEAEQVGALYNEKVGANERKRKRRTTISIAAKDALERHFGEQNKPSSQEILRMAEELNLEKEVVRVWFCNRRQREKRVKTSLNQSLFTISKEHLECR.

Positions 5–13 (PFTSTDTFI) match the 9aaTAD motif. The POU-specific domain maps to 124 to 198 (MDSPEIRELE…ILSKWLEEAE (75 aa)). The homeobox DNA-binding region spans 214-273 (KRKRRTTISIAAKDALERHFGEQNKPSSQEILRMAEELNLEKEVVRVWFCNRRQREKRVK).

It belongs to the POU transcription factor family. Class-1 subfamily. In terms of assembly, interacts with PITX1. Interacts with LHX3. Interacts with ELK1.

The protein resides in the nucleus. In terms of biological role, transcription factor involved in the specification of the lactotrope, somatotrope, and thyrotrope phenotypes in the developing anterior pituitary. Activates growth hormone and prolactin genes. Specifically binds to the consensus sequence 5'-TAAAT-3'. In Bos taurus (Bovine), this protein is Pituitary-specific positive transcription factor 1 (POU1F1).